The primary structure comprises 640 residues: Serine/threonine-protein kinase WNG1 (640 aa).

The signal sequence occupies residues 1–70 (MPEQDLASGF…GVLCTVEAGA (70 aa)). Disordered stretches follow at residues 100–222 (PEVT…AQPT) and 237–280 (SHPD…DASN). The span at 104–120 (HASSEGSPQFESSLSQQ) shows a compositional bias: polar residues. Positions 124–141 (RPADRGEAHNGEEPRKDA) are enriched in basic and acidic residues. Residues 175–186 (QRQASSAAESLA) are compositionally biased toward low complexity. The segment covering 248 to 279 (FSKKQEGRRERRLAVRGDDSFARGHNRDRDAS) has biased composition (basic and acidic residues). One can recognise a Protein kinase domain in the interval 291–593 (WAKIAALATG…LKQVMEDPYF (303 aa)). Position 395 (Lys395) interacts with ATP. Asp486 functions as the Proton acceptor in the catalytic mechanism. Residues 609 to 640 (PFRGDFSIDDPDAGGKMYIPPSKEQDHEQENE) form a disordered region. The segment covering 631–640 (KEQDHEQENE) has biased composition (basic and acidic residues).

The protein belongs to the protein kinase superfamily. STE Ser/Thr protein kinase family. WNG subfamily. Requires Mg(2+) as cofactor.

The protein localises to the cytoplasmic granule. It localises to the secreted. The protein resides in the parasitophorous vacuole lumen. The catalysed reaction is L-seryl-[protein] + ATP = O-phospho-L-seryl-[protein] + ADP + H(+). It carries out the reaction L-threonyl-[protein] + ATP = O-phospho-L-threonyl-[protein] + ADP + H(+). In terms of biological role, serine/threonine-protein kinase which, at the tachyzoite stage, phosphorylates several parasitophorous vacuole (PV)-resident proteins such as GRA2, GRA6 and GRA7. By phosphorylating GRA2 and GRA6, regulates the formation of a functional intravacuolar network (IVN); IVN is composed of membranous tubules that bud from the PV membrane into the vacuolar lumen. Plays a role in the establishement of chronic infection in the host by controlling cyst formation in the host tissues. In Toxoplasma gondii, this protein is Serine/threonine-protein kinase WNG1.